A 736-amino-acid chain; its full sequence is Catalase-peroxidase (736 aa).

A cross-link (tryptophyl-tyrosyl-methioninium (Trp-Tyr) (with M-250)) is located at residues 96–224 (WHSAGTYRTG…LAAVQMGLIY (129 aa)). H97 (proton acceptor) is an active-site residue. A cross-link (tryptophyl-tyrosyl-methioninium (Tyr-Met) (with W-96)) is located at residues 224–250 (YVNPEGPDGNPDPVASGRDVRETFGRM). H265 is a binding site for heme b.

The protein belongs to the peroxidase family. Peroxidase/catalase subfamily. As to quaternary structure, homodimer or homotetramer. Heme b is required as a cofactor. Formation of the three residue Trp-Tyr-Met cross-link is important for the catalase, but not the peroxidase activity of the enzyme.

The enzyme catalyses H2O2 + AH2 = A + 2 H2O. It catalyses the reaction 2 H2O2 = O2 + 2 H2O. Functionally, bifunctional enzyme with both catalase and broad-spectrum peroxidase activity. The chain is Catalase-peroxidase from Pelobacter propionicus (strain DSM 2379 / NBRC 103807 / OttBd1).